Reading from the N-terminus, the 414-residue chain is 2,3-bisphosphoglycerate-independent phosphoglycerate mutase (414 aa).

This sequence belongs to the BPG-independent phosphoglycerate mutase family. A-PGAM subfamily.

It carries out the reaction (2R)-2-phosphoglycerate = (2R)-3-phosphoglycerate. Its pathway is carbohydrate degradation; glycolysis; pyruvate from D-glyceraldehyde 3-phosphate: step 3/5. Its function is as follows. Catalyzes the interconversion of 2-phosphoglycerate and 3-phosphoglycerate. The chain is 2,3-bisphosphoglycerate-independent phosphoglycerate mutase from Saccharolobus islandicus (strain L.S.2.15 / Lassen #1) (Sulfolobus islandicus).